Consider the following 724-residue polypeptide: Tripartite terminase subunit 1 (724 aa).

A C3H1-type zinc finger spans residues 175–203 (CAVCFEELCVTANQGEATHRRLLGCVCDH). The tract at residues 410–445 (GGDDADADGGAAGGADAGDGGVGDEDGPGAPPPADA) is disordered. Residues 419-430 (GAAGGADAGDGG) are compositionally biased toward gly residues. An ATP-binding site is contributed by 652–659 (FRSVFHCG).

The protein belongs to the herpesviridae TRM1 protein family. In terms of assembly, associates with TRM2 and TRM3 to form the tripartite terminase complex. Interacts with portal protein.

It localises to the host nucleus. Its function is as follows. Component of the molecular motor that translocates viral genomic DNA in empty capsid during DNA packaging. Forms a tripartite terminase complex together with TRM2 and TRM3 in the host cytoplasm. Once the complex reaches the host nucleus, it interacts with the capsid portal vertex. This portal forms a ring in which genomic DNA is translocated into the capsid. TRM1 carries an endonuclease activity that plays an important role for the cleavage of concatemeric viral DNA into unit length genomes. This chain is Tripartite terminase subunit 1, found in Suid herpesvirus 1 (strain Indiana-Funkhauser / Becker) (SuHV-1).